A 245-amino-acid polypeptide reads, in one-letter code: Adenosylcobinamide-GDP ribazoletransferase (245 aa).

The next 5 helical transmembrane spans lie at 31 to 51 (LLHYPAVGLFLGALLWLAALL), 57 to 77 (PLLQAALLLALWVALTGALHL), 109 to 129 (VAVVVLVIMLLLKFSALLVVL), 134 to 154 (PAALVLAPLLGRAALLALFLC), and 176 to 196 (ALMVLALVVIGCLLLGATGLL).

This sequence belongs to the CobS family. The cofactor is Mg(2+).

It is found in the cell inner membrane. It catalyses the reaction alpha-ribazole + adenosylcob(III)inamide-GDP = adenosylcob(III)alamin + GMP + H(+). It carries out the reaction alpha-ribazole 5'-phosphate + adenosylcob(III)inamide-GDP = adenosylcob(III)alamin 5'-phosphate + GMP + H(+). The protein operates within cofactor biosynthesis; adenosylcobalamin biosynthesis; adenosylcobalamin from cob(II)yrinate a,c-diamide: step 7/7. In terms of biological role, joins adenosylcobinamide-GDP and alpha-ribazole to generate adenosylcobalamin (Ado-cobalamin). Also synthesizes adenosylcobalamin 5'-phosphate from adenosylcobinamide-GDP and alpha-ribazole 5'-phosphate. This Stutzerimonas stutzeri (strain A1501) (Pseudomonas stutzeri) protein is Adenosylcobinamide-GDP ribazoletransferase.